The sequence spans 257 residues: tRNA (guanine-N(7)-)-methyltransferase (257 aa).

Residues methionine 1–threonine 12 show a composition bias toward acidic residues. A disordered region spans residues methionine 1–serine 25. S-adenosyl-L-methionine is bound by residues glycine 80, glutamate 103–isoleucine 104, asparagine 138–alanine 139, and leucine 158. The active site involves aspartate 161. Serine 236–glutamate 238 serves as a coordination point for S-adenosyl-L-methionine.

It belongs to the class I-like SAM-binding methyltransferase superfamily. TrmB family.

The protein localises to the nucleus. The catalysed reaction is guanosine(46) in tRNA + S-adenosyl-L-methionine = N(7)-methylguanosine(46) in tRNA + S-adenosyl-L-homocysteine. It functions in the pathway tRNA modification; N(7)-methylguanine-tRNA biosynthesis. Catalyzes the formation of N(7)-methylguanine at position 46 (m7G46) in tRNA. The sequence is that of tRNA (guanine-N(7)-)-methyltransferase from Drosophila ananassae (Fruit fly).